The sequence spans 299 residues: UDP-N-acetylenolpyruvoylglucosamine reductase (299 aa).

In terms of domain architecture, FAD-binding PCMH-type spans 31 to 192; it reads VGGVAEVVFK…VDATFVGACG (162 aa). Arginine 172 is an active-site residue. Residue serine 221 is the Proton donor of the active site. Residue glutamate 291 is part of the active site.

It belongs to the MurB family. The cofactor is FAD.

The protein resides in the cytoplasm. It catalyses the reaction UDP-N-acetyl-alpha-D-muramate + NADP(+) = UDP-N-acetyl-3-O-(1-carboxyvinyl)-alpha-D-glucosamine + NADPH + H(+). It participates in cell wall biogenesis; peptidoglycan biosynthesis. Functionally, cell wall formation. The sequence is that of UDP-N-acetylenolpyruvoylglucosamine reductase from Anaplasma marginale (strain St. Maries).